The primary structure comprises 633 residues: Chaperone protein HtpG (633 aa).

The tract at residues 1-341 (MTAPHETMSF…SADLPLNVSR (341 aa)) is a; substrate-binding. The tract at residues 342 to 562 (ELLQESRDVK…EGDMSGYLQR (221 aa)) is b. Residues 563-633 (LLKQAGQKAP…YVQRVNKLLA (71 aa)) form a c region.

This sequence belongs to the heat shock protein 90 family. As to quaternary structure, homodimer.

It localises to the cytoplasm. Functionally, molecular chaperone. Has ATPase activity. In Cupriavidus taiwanensis (strain DSM 17343 / BCRC 17206 / CCUG 44338 / CIP 107171 / LMG 19424 / R1) (Ralstonia taiwanensis (strain LMG 19424)), this protein is Chaperone protein HtpG.